The primary structure comprises 56 residues: Large ribosomal subunit protein eL37 (56 aa).

Residues Cys-19, Cys-22, Cys-34, and Cys-37 each coordinate Zn(2+). Residues 19–37 (CRRCGSVSLNVHTKQCTSC) form a C4-type zinc finger.

It belongs to the eukaryotic ribosomal protein eL37 family. It depends on Zn(2+) as a cofactor.

Binds to the 23S rRNA. The polypeptide is Large ribosomal subunit protein eL37 (Methanosarcina mazei (strain ATCC BAA-159 / DSM 3647 / Goe1 / Go1 / JCM 11833 / OCM 88) (Methanosarcina frisia)).